A 507-amino-acid chain; its full sequence is O-fucosyltransferase 30 (507 aa).

A helical; Signal-anchor for type II membrane protein transmembrane segment spans residues 26–46 (AIFLCSVSILVVFFIVVFFIT). N-linked (GlcNAc...) asparagine glycosylation is found at asparagine 110, asparagine 146, asparagine 398, and asparagine 410.

Belongs to the glycosyltransferase GT106 family.

Its subcellular location is the membrane. It participates in glycan metabolism. The polypeptide is O-fucosyltransferase 30 (Arabidopsis thaliana (Mouse-ear cress)).